The chain runs to 612 residues: Chaperone protein DnaK (612 aa).

Thr-174 is subject to Phosphothreonine; by autocatalysis. The interval 578 to 612 (GAQAGAQGQGAAGGQKQDGNVYDADYKVVDDDKKE) is disordered. Basic and acidic residues predominate over residues 601-612 (ADYKVVDDDKKE).

It belongs to the heat shock protein 70 family.

Acts as a chaperone. This Moorella thermoacetica (strain ATCC 39073 / JCM 9320) protein is Chaperone protein DnaK.